A 106-amino-acid polypeptide reads, in one-letter code: MRNSIYKLIMFAVLCMVLTSSLSYAQVTFSRDWNAGKRSLAEAAQSTGDCAAIWRSVTNLCAAVTKNIQHLTMCEARALMKNLQSEDASMENNGGGGLPLFSNGHL.

Residues 1–25 form the signal peptide; the sequence is MRNSIYKLIMFAVLCMVLTSSLSYA. Gln26 bears the Pyrrolidone carboxylic acid mark. An Alanine amide modification is found at Ala35. Residues 39–106 constitute a propeptide that is removed on maturation; the sequence is SLAEAAQSTG…GLPLFSNGHL (68 aa).

This sequence belongs to the AKH/HRTH/RPCH family. As to expression, only expressed in the head and thorax body segments of adults. Is more expressed in adult males than in females.

The protein resides in the secreted. Functionally, neuropeptide with neuromodulator or neurotransmitter role that activates the adipokinetic hormone/corazonin-related peptide receptor (ACPR). May function in regulation of post-ecdysis activities. Does not activate the A.gambiae adipokinetic hormone (AKH) and corazonin (CRZ) receptors. This Aedes aegypti (Yellowfever mosquito) protein is Adipokinetic hormone/corazonin-related peptide.